The following is a 546-amino-acid chain: MAAKEVKFGNEARIKMLRGVNVLADAVKVTLGPRGRNVVLDKSFGAPVITKDGVSVAREIELEDKFENMGAQMVKEVASKANDAAGDGTTTATVLAQSIVNEGLKAVAAGMNPMDLKRGIDKAVIGAVEELKRLSVPCADSKAIAQVGTISANSDEKVGILIAEAMEKVGKKGVITVEEGSGLQDELDVVEGMQFDRGYLSPYFINKQENGTVELENPFILLADKKISNIREMLPILEAVAKSSKPLLVIAEDVEGEALATLVVNTMRGIVKVAAVKAPGFGDRRKAMLQDIATLTAGTVISEEIGLELEKATLEDMGQAKRVVITKDTTTIIDGVGDKAMIDSRVAQINQQREEATSDYDREKLQERVAKLAGGVAVIKVGAATEVEMKEKKARVEDALHSTRAAVEEGVVAGGGVALIRAANGIQQLCGDNEDQNVGIKVARRAMEAPLRQIVANAGEEPSVIANNVKAEDGNMGYNAATEKYGNMIDMGILDPTKVTRSALQYAASIAGLMITTECMITDLPKEEKPDVSASSGGMGGMGGMM.

Residues 30-33 (TLGP), Lys51, 87-91 (DGTTT), Gly415, 479-481 (NAA), and Asp495 each bind ATP. Positions 527–546 (EEKPDVSASSGGMGGMGGMM) are disordered. Residues 537–546 (GGMGGMGGMM) are compositionally biased toward gly residues.

This sequence belongs to the chaperonin (HSP60) family. Forms a cylinder of 14 subunits composed of two heptameric rings stacked back-to-back. Interacts with the co-chaperonin GroES.

It is found in the cytoplasm. It carries out the reaction ATP + H2O + a folded polypeptide = ADP + phosphate + an unfolded polypeptide.. Together with its co-chaperonin GroES, plays an essential role in assisting protein folding. The GroEL-GroES system forms a nano-cage that allows encapsulation of the non-native substrate proteins and provides a physical environment optimized to promote and accelerate protein folding. This chain is Chaperonin GroEL, found in Baumannia cicadellinicola subsp. Homalodisca coagulata.